The primary structure comprises 396 residues: Period circadian protein (396 aa).

Disordered stretches follow at residues 27–120 (VTAP…APPV), 164–188 (LEYS…WEGE), 253–273 (GGNG…TNQY), and 333–362 (SPSS…TSQA). Residues 93–114 (GTSGTGNSGDGGGGGGANGTGS) show a composition bias toward gly residues. A compositionally biased stretch (gly residues) spans 253–262 (GGNGNVGSGN). Low complexity predominate over residues 333 to 342 (SPSSTNTNPN).

Forms a heterodimer with timeless (TIM); the complex then translocates into the nucleus. Phosphorylated with a circadian rhythmicity, probably by the double-time protein (dbt). Phosphorylation could be implicated in the stability of per monomer and in the formation of heterodimer per-tim.

The protein localises to the nucleus. Its subcellular location is the cytoplasm. It is found in the perinuclear region. Its function is as follows. Essential for biological clock functions. Determines the period length of circadian and ultradian rhythms; an increase in PER dosage leads to shortened circadian rhythms and a decrease leads to lengthened circadian rhythms. Essential for the circadian rhythmicity of locomotor activity, eclosion behavior, and for the rhythmic component of the male courtship song that originates in the thoracic nervous system. The biological cycle depends on the rhythmic formation and nuclear localization of the TIM-PER complex. Light induces the degradation of TIM, which promotes elimination of PER. Nuclear activity of the heterodimer coordinatively regulates PER and TIM transcription through a negative feedback loop. Behaves as a negative element in circadian transcriptional loop. Does not appear to bind DNA, suggesting indirect transcriptional inhibition. This is Period circadian protein (per) from Drosophila pavlovskiana (Fruit fly).